Reading from the N-terminus, the 501-residue chain is Glucose-6-phosphate isomerase (501 aa).

Residues 78–101 (GIANPTENRAAEHSAERGDGAPES) are disordered. Positions 86 to 97 (RAAEHSAERGDG) are enriched in basic and acidic residues. Glu-333 (proton donor) is an active-site residue. Residues His-364 and Lys-474 contribute to the active site.

It belongs to the GPI family.

It localises to the cytoplasm. The enzyme catalyses alpha-D-glucose 6-phosphate = beta-D-fructose 6-phosphate. Its pathway is carbohydrate biosynthesis; gluconeogenesis. It participates in carbohydrate degradation; glycolysis; D-glyceraldehyde 3-phosphate and glycerone phosphate from D-glucose: step 2/4. Functionally, catalyzes the reversible isomerization of glucose-6-phosphate to fructose-6-phosphate. This Sphingopyxis alaskensis (strain DSM 13593 / LMG 18877 / RB2256) (Sphingomonas alaskensis) protein is Glucose-6-phosphate isomerase.